Here is a 740-residue protein sequence, read N- to C-terminus: MFKKTKPRISILALTISCAIYSGAALAQDAANSNKFWWPEQLNLSPLRQHGVESNPMGSTFNYAQAFKKLDLNAVKADIKALMTQSQDWWPADYGHYGPFFIRMAWHSAGTYRIYDGRGGAGGGQQRFEPLNSWPDNVNLDRARRLLWPIKQKYGSSISWADLMVLTGNVALESMGFKTFGFAGGRQDDWEADTVYWGPEKKWLDDKRYSGDRTLEKPLAAVQMGLIYVNPEGPNGVPDPLLAAKDIRDTFGRMAMNDEETVALIAGGHTFGKAHGAHKPETCLGKEPAAAGIEEQGLGWTNKCGKGNAEDTITSGLEGAWSVNPIAWTTQYLDNLFAFEWVQVRSPAGAVQWIPKDGQAANLVPDAHDKTKRHAPIMFTTDLALKEDPEYRKISLRFKENPKEFELAFAKAWFKLTHRDMGPRVRYLGNEVPGEILLWQDPVPEVDHPLIDAADITKLKSSLLSSGLSSAELVRTAWAAAASFRGTDLRGGANGARIRLAPQNTWAVNNPRELNRALTRLEKVQGDFNKASTGGKKVSLADVIVLGGVAAVEQAAKKAGYAVEVPFIPGRTDASQAQTDVTSFAVLEPTADGFRNYYAKDNTLPPTDMLVERANLLTLTVPEMTVLVGGLRVLGANSDAAKNGIFTDKPGTLSNDFFINLLDMSTQWRKSAKTGGLYEGLDRKTGKLKWTATPVDLIFGSHSELRAVAEVYAANDGQEKFVNDFVKAWHKVMMLDRFDW.

An N-terminal signal peptide occupies residues 1–27 (MFKKTKPRISILALTISCAIYSGAALA). Positions 106–228 (WHSAGTYRIY…LAAVQMGLIY (123 aa)) form a cross-link, tryptophyl-tyrosyl-methioninium (Trp-Tyr) (with M-254). Catalysis depends on His107, which acts as the Proton acceptor. A cross-link (tryptophyl-tyrosyl-methioninium (Tyr-Met) (with W-106)) is located at residues 228–254 (YVNPEGPNGVPDPLLAAKDIRDTFGRM). His269 contributes to the heme b binding site.

Belongs to the peroxidase family. Peroxidase/catalase subfamily. Homodimer or homotetramer. The cofactor is heme b. Post-translationally, formation of the three residue Trp-Tyr-Met cross-link is important for the catalase, but not the peroxidase activity of the enzyme.

The enzyme catalyses H2O2 + AH2 = A + 2 H2O. The catalysed reaction is 2 H2O2 = O2 + 2 H2O. In terms of biological role, bifunctional enzyme with both catalase and broad-spectrum peroxidase activity. The sequence is that of Catalase-peroxidase 2 from Cellvibrio japonicus (strain Ueda107) (Pseudomonas fluorescens subsp. cellulosa).